A 116-amino-acid polypeptide reads, in one-letter code: Iron-sulfur cluster insertion protein ErpA (116 aa).

Iron-sulfur cluster contacts are provided by Cys44, Cys108, and Cys110.

The protein belongs to the HesB/IscA family. In terms of assembly, homodimer. Iron-sulfur cluster serves as cofactor.

Functionally, required for insertion of 4Fe-4S clusters for at least IspG. This Shewanella oneidensis (strain ATCC 700550 / JCM 31522 / CIP 106686 / LMG 19005 / NCIMB 14063 / MR-1) protein is Iron-sulfur cluster insertion protein ErpA.